We begin with the raw amino-acid sequence, 469 residues long: Dihydrolipoyl dehydrogenase (469 aa).

Residues 40–48 (EKAVLGGVC), lysine 57, and alanine 120 each bind FAD. An intrachain disulfide couples cysteine 48 to cysteine 53. NAD(+) contacts are provided by residues 186–190 (GGGAI), glutamate 209, and 275–278 (AVGV). The FAD site is built by aspartate 317 and alanine 325. Histidine 450 serves as the catalytic Proton acceptor.

It belongs to the class-I pyridine nucleotide-disulfide oxidoreductase family. In terms of assembly, homodimer. It depends on FAD as a cofactor.

The protein resides in the cytoplasm. The enzyme catalyses N(6)-[(R)-dihydrolipoyl]-L-lysyl-[protein] + NAD(+) = N(6)-[(R)-lipoyl]-L-lysyl-[protein] + NADH + H(+). In terms of biological role, lipoamide dehydrogenase is a component of the alpha-ketoacid dehydrogenase complexes. This chain is Dihydrolipoyl dehydrogenase (lpd), found in Chlorobaculum tepidum (strain ATCC 49652 / DSM 12025 / NBRC 103806 / TLS) (Chlorobium tepidum).